The chain runs to 513 residues: Cytochrome P450 705A1 (513 aa).

The chain crosses the membrane as a helical span at residues 9–29 (QNCFIIILLCSFSLISYFVFF). Position 448 (Cys448) interacts with heme.

It belongs to the cytochrome P450 family. The cofactor is heme. In terms of tissue distribution, expressed in root stele, root cortex, root epidermis, root pericycle of the root hair zone, and quiescent center at the root meristematic zone.

It is found in the membrane. Functionally, cleaves the arabidiol side chain at C15 to form 14-apo-arabidiol and a side-chain fragment. Involved in the biosynthesis of the volatile homoterpene (E)-4,8-dimethyl-1,3,7-nonatriene (DMNT) in roots. Involved in the production of DMNT by degrading the triterpene arabidiol. May be involved in the defense again the fungal root pathogen Pythium irregulare by producing DMNT. This Arabidopsis thaliana (Mouse-ear cress) protein is Cytochrome P450 705A1.